A 178-amino-acid polypeptide reads, in one-letter code: 2-C-methyl-D-erythritol 2,4-cyclodiphosphate synthase (178 aa).

Aspartate 24, histidine 26, and histidine 61 together coordinate a divalent metal cation. 24–26 serves as a coordination point for 4-CDP-2-C-methyl-D-erythritol 2-phosphate; it reads DSH. 150 to 153 is a 4-CDP-2-C-methyl-D-erythritol 2-phosphate binding site; sequence TSGE.

This sequence belongs to the IspF family. As to quaternary structure, homotrimer. It depends on a divalent metal cation as a cofactor.

It catalyses the reaction 4-CDP-2-C-methyl-D-erythritol 2-phosphate = 2-C-methyl-D-erythritol 2,4-cyclic diphosphate + CMP. It functions in the pathway isoprenoid biosynthesis; isopentenyl diphosphate biosynthesis via DXP pathway; isopentenyl diphosphate from 1-deoxy-D-xylulose 5-phosphate: step 4/6. Functionally, involved in the biosynthesis of isopentenyl diphosphate (IPP) and dimethylallyl diphosphate (DMAPP), two major building blocks of isoprenoid compounds. Catalyzes the conversion of 4-diphosphocytidyl-2-C-methyl-D-erythritol 2-phosphate (CDP-ME2P) to 2-C-methyl-D-erythritol 2,4-cyclodiphosphate (ME-CPP) with a corresponding release of cytidine 5-monophosphate (CMP). The chain is 2-C-methyl-D-erythritol 2,4-cyclodiphosphate synthase from Chlamydia trachomatis serovar A (strain ATCC VR-571B / DSM 19440 / HAR-13).